A 383-amino-acid polypeptide reads, in one-letter code: Putative F-box protein At4g09190 (383 aa).

An F-box domain is found at 16–67 (RSQREHIPLDLIVEIVSSLPAKSIVRFRSVSKLWSSIITTPDFTSSVVTRSL).

This is Putative F-box protein At4g09190 from Arabidopsis thaliana (Mouse-ear cress).